The sequence spans 303 residues: Beta-carotene 3-hydroxylase 2, chloroplastic (303 aa).

A chloroplast-targeting transit peptide spans 1–52; the sequence is MAAGLSTIAVTLKPLNRSSFSANHPISTAVFPPSLRFNGFRRRKILTVCFVV. 2 helical membrane passes run 96–116 and 130–150; these read YLIA…MAVY and VLEM…MEFW. The Fatty acid hydroxylase domain maps to 143 to 270; it reads AAVGMEFWAR…KFKGVPYGLF (128 aa). Residues 155–160 carry the Histidine box-1 motif; it reads HRALWH. A Histidine box-2 motif is present at residues 165–171; it reads NMHESHH. The next 2 membrane-spanning stretches (helical) occupy residues 180 to 200 and 206 to 226; these read LNDV…YYGF and VPGL…AYMF. The short motif at 228 to 233 is the Histidine box-3 element; it reads HDGLVH. Residues 254 to 258 carry the Histidine box-4 motif; sequence HQLHH.

It belongs to the sterol desaturase family. As to quaternary structure, homodimer. Expressed in leaves, flowers, stems, roots and siliques.

Its subcellular location is the plastid. It is found in the chloroplast membrane. The enzyme catalyses all-trans-beta-carotene + 4 reduced [2Fe-2S]-[ferredoxin] + 2 O2 + 4 H(+) = all-trans-zeaxanthin + 4 oxidized [2Fe-2S]-[ferredoxin] + 2 H2O. Nonheme diiron monooxygenase involved in the biosynthesis of xanthophylls. Specific for beta-ring hydroxylations of beta-carotene. Also has a low activity toward the beta- and epsilon-rings of alpha-carotene. No activity with acyclic carotenoids such as lycopene and neurosporene. Uses ferredoxin as an electron donor. This is Beta-carotene 3-hydroxylase 2, chloroplastic (BETA-OHASE 2) from Arabidopsis thaliana (Mouse-ear cress).